The primary structure comprises 164 residues: C-type natriuretic peptide (164 aa).

The N-terminal stretch at Met1–Gly23 is a signal peptide. Disordered stretches follow at residues Lys24 to Ala93 and His115 to Arg134. A propeptide spanning residues Lys24–Lys142 is cleaved from the precursor. Gly residues predominate over residues Ala58–Ser67. Low complexity predominate over residues Gly68 to Ala93. Residues Gly121 to Ala132 show a composition bias toward gly residues. Cys148 and Cys164 are oxidised to a cystine.

It belongs to the natriuretic peptide family. As to expression, expressed by the venom gland.

It localises to the secreted. In terms of biological role, snake venom natriuretic peptide that has a vasorelaxant activity in rat aortic strips and a diuretic potency in anesthetized rats. May act by activating natriuretic receptors (NPR1 and/or NPR2). The protein is C-type natriuretic peptide of Philodryas olfersii (Green snake).